A 320-amino-acid polypeptide reads, in one-letter code: ATP-dependent 6-phosphofructokinase (320 aa).

Gly12 contacts ATP. Position 22-26 (22-26 (RGVVR)) interacts with ADP. ATP is bound by residues 73–74 (RF) and 103–106 (GDGS). A Mg(2+)-binding site is contributed by Asp104. 126-128 (TID) provides a ligand contact to substrate. The Proton acceptor role is filled by Asp128. Arg155 contributes to the ADP binding site. Residues Arg163 and 170–172 (MGR) each bind substrate. ADP-binding positions include 186-188 (GCE), Lys212, and 214-216 (KKH). Residues Glu223, Arg244, and 250 to 253 (HIQR) contribute to the substrate site.

The protein belongs to the phosphofructokinase type A (PFKA) family. ATP-dependent PFK group I subfamily. Prokaryotic clade 'B1' sub-subfamily. In terms of assembly, homotetramer. Mg(2+) serves as cofactor.

Its subcellular location is the cytoplasm. It carries out the reaction beta-D-fructose 6-phosphate + ATP = beta-D-fructose 1,6-bisphosphate + ADP + H(+). It participates in carbohydrate degradation; glycolysis; D-glyceraldehyde 3-phosphate and glycerone phosphate from D-glucose: step 3/4. Allosterically activated by ADP and other diphosphonucleosides, and allosterically inhibited by phosphoenolpyruvate. Catalyzes the phosphorylation of D-fructose 6-phosphate to fructose 1,6-bisphosphate by ATP, the first committing step of glycolysis. The sequence is that of ATP-dependent 6-phosphofructokinase from Aliivibrio fischeri (strain ATCC 700601 / ES114) (Vibrio fischeri).